A 357-amino-acid chain; its full sequence is MTQTPETALKRTPLHAAHLRAGARMVPFGGWDMPVQYSGLKAEHQAVRESAGVFDVSHMGEFRIQGEGALAFLQHVTPNDVSKLRPGRAQYNWLPNDRGGLVDDIYIYMVGENEYLMVVNASNIDKDWAHLQTLAAGFGVTLTNESDRWALLAVQGPKAAEVLQPHVDVDLGSKKKNAYFPARLFGFNVHLARTGYTGEDGFEVFIDASEAETVWDKLMAIGVTPAGLGARDTLRLEAGFPLYGHEFADDIHPLSSHYTWVVKDKPFYGREALQQPAQQKLIGLKLDKVPVREGYPVLQSGQVVGHVTSGTSSPTLGHPIALALVQAGAADATDFEVEVRGKAHPATRTDVPFYKAP.

It belongs to the GcvT family. In terms of assembly, the glycine cleavage system is composed of four proteins: P, T, L and H.

The enzyme catalyses N(6)-[(R)-S(8)-aminomethyldihydrolipoyl]-L-lysyl-[protein] + (6S)-5,6,7,8-tetrahydrofolate = N(6)-[(R)-dihydrolipoyl]-L-lysyl-[protein] + (6R)-5,10-methylene-5,6,7,8-tetrahydrofolate + NH4(+). The glycine cleavage system catalyzes the degradation of glycine. This chain is Aminomethyltransferase, found in Deinococcus deserti (strain DSM 17065 / CIP 109153 / LMG 22923 / VCD115).